Reading from the N-terminus, the 512-residue chain is Probable amidase At4g34880 (512 aa).

Catalysis depends on charge relay system residues Lys117 and Ser198. Ser222 (acyl-ester intermediate) is an active-site residue.

It belongs to the amidase family. Expressed in vasculature of roots, cotyledons, leaves and sepals.

The catalysed reaction is a monocarboxylic acid amide + H2O = a monocarboxylate + NH4(+). The polypeptide is Probable amidase At4g34880 (Arabidopsis thaliana (Mouse-ear cress)).